A 476-amino-acid polypeptide reads, in one-letter code: Aspartyl/glutamyl-tRNA(Asn/Gln) amidotransferase subunit B (476 aa).

This sequence belongs to the GatB/GatE family. GatB subfamily. Heterotrimer of A, B and C subunits.

It catalyses the reaction L-glutamyl-tRNA(Gln) + L-glutamine + ATP + H2O = L-glutaminyl-tRNA(Gln) + L-glutamate + ADP + phosphate + H(+). The enzyme catalyses L-aspartyl-tRNA(Asn) + L-glutamine + ATP + H2O = L-asparaginyl-tRNA(Asn) + L-glutamate + ADP + phosphate + 2 H(+). Allows the formation of correctly charged Asn-tRNA(Asn) or Gln-tRNA(Gln) through the transamidation of misacylated Asp-tRNA(Asn) or Glu-tRNA(Gln) in organisms which lack either or both of asparaginyl-tRNA or glutaminyl-tRNA synthetases. The reaction takes place in the presence of glutamine and ATP through an activated phospho-Asp-tRNA(Asn) or phospho-Glu-tRNA(Gln). The protein is Aspartyl/glutamyl-tRNA(Asn/Gln) amidotransferase subunit B of Clostridium botulinum (strain Loch Maree / Type A3).